A 93-amino-acid chain; its full sequence is Aspartyl/glutamyl-tRNA(Asn/Gln) amidotransferase subunit C (93 aa).

It belongs to the GatC family. In terms of assembly, heterotrimer of A, B and C subunits.

It catalyses the reaction L-glutamyl-tRNA(Gln) + L-glutamine + ATP + H2O = L-glutaminyl-tRNA(Gln) + L-glutamate + ADP + phosphate + H(+). It carries out the reaction L-aspartyl-tRNA(Asn) + L-glutamine + ATP + H2O = L-asparaginyl-tRNA(Asn) + L-glutamate + ADP + phosphate + 2 H(+). Allows the formation of correctly charged Asn-tRNA(Asn) or Gln-tRNA(Gln) through the transamidation of misacylated Asp-tRNA(Asn) or Glu-tRNA(Gln) in organisms which lack either or both of asparaginyl-tRNA or glutaminyl-tRNA synthetases. The reaction takes place in the presence of glutamine and ATP through an activated phospho-Asp-tRNA(Asn) or phospho-Glu-tRNA(Gln). This is Aspartyl/glutamyl-tRNA(Asn/Gln) amidotransferase subunit C from Nautilia profundicola (strain ATCC BAA-1463 / DSM 18972 / AmH).